We begin with the raw amino-acid sequence, 373 residues long: GTP cyclohydrolase 1 type 2 homolog (373 aa).

A divalent metal cation-binding residues include His-67, His-68, Asp-106, His-333, and Glu-336.

The protein belongs to the GTP cyclohydrolase I type 2/NIF3 family. As to quaternary structure, homohexamer.

In Listeria monocytogenes serovar 1/2a (strain ATCC BAA-679 / EGD-e), this protein is GTP cyclohydrolase 1 type 2 homolog.